Reading from the N-terminus, the 198-residue chain is Glycerol-3-phosphate acyltransferase (198 aa).

Transmembrane regions (helical) follow at residues 5-25, 56-76, 84-104, 114-134, and 158-178; these read LILLSLLAYVIGSIPSGLWIG, SIVTVMDILKGTVATLLPFFF, FWLLTGAFAIIGHSFPLFAGF, AGVILAYAPLLFVAALVVFLV, and LFMGDWILIILVACIALFVIW.

It belongs to the PlsY family. In terms of assembly, probably interacts with PlsX.

Its subcellular location is the cell membrane. The catalysed reaction is an acyl phosphate + sn-glycerol 3-phosphate = a 1-acyl-sn-glycero-3-phosphate + phosphate. It functions in the pathway lipid metabolism; phospholipid metabolism. Functionally, catalyzes the transfer of an acyl group from acyl-phosphate (acyl-PO(4)) to glycerol-3-phosphate (G3P) to form lysophosphatidic acid (LPA). This enzyme utilizes acyl-phosphate as fatty acyl donor, but not acyl-CoA or acyl-ACP. The sequence is that of Glycerol-3-phosphate acyltransferase from Listeria monocytogenes serotype 4b (strain CLIP80459).